A 426-amino-acid chain; its full sequence is Enolase (426 aa).

Glutamine 163 serves as a coordination point for (2R)-2-phosphoglycerate. Glutamate 205 serves as the catalytic Proton donor. Positions 242, 286, and 313 each coordinate Mg(2+). 4 residues coordinate (2R)-2-phosphoglycerate: lysine 338, arginine 367, serine 368, and lysine 389. Lysine 338 (proton acceptor) is an active-site residue.

Belongs to the enolase family. Requires Mg(2+) as cofactor.

The protein resides in the cytoplasm. It localises to the secreted. Its subcellular location is the cell surface. The catalysed reaction is (2R)-2-phosphoglycerate = phosphoenolpyruvate + H2O. Its pathway is carbohydrate degradation; glycolysis; pyruvate from D-glyceraldehyde 3-phosphate: step 4/5. Catalyzes the reversible conversion of 2-phosphoglycerate (2-PG) into phosphoenolpyruvate (PEP). It is essential for the degradation of carbohydrates via glycolysis. In Helicobacter pylori (strain J99 / ATCC 700824) (Campylobacter pylori J99), this protein is Enolase.